The primary structure comprises 257 residues: Phosphonates import ATP-binding protein PhnC (257 aa).

Residues 2–246 (IEFRNVSKVY…KFAEIYGDVA (245 aa)) enclose the ABC transporter domain. 35–42 (GLSGAGKS) contributes to the ATP binding site.

This sequence belongs to the ABC transporter superfamily. Phosphonates importer (TC 3.A.1.9.1) family. The complex is composed of two ATP-binding proteins (PhnC), two transmembrane proteins (PhnE) and a solute-binding protein (PhnD).

The protein localises to the cell membrane. It carries out the reaction phosphonate(out) + ATP + H2O = phosphonate(in) + ADP + phosphate + H(+). Part of the ABC transporter complex PhnCDE involved in phosphonates import. Responsible for energy coupling to the transport system. The polypeptide is Phosphonates import ATP-binding protein PhnC (Bacillus thuringiensis subsp. konkukian (strain 97-27)).